Here is a 37-residue protein sequence, read N- to C-terminus: Large ribosomal subunit protein bL36c (37 aa).

This sequence belongs to the bacterial ribosomal protein bL36 family.

It is found in the plastid. Its subcellular location is the chloroplast. This is Large ribosomal subunit protein bL36c from Ostreococcus tauri.